A 307-amino-acid polypeptide reads, in one-letter code: Taste receptor type 2 member 41 (307 aa).

Over 1–7 the chain is Extracellular; the sequence is MQAALTA. Residues 8–28 traverse the membrane as a helical segment; it reads FFMLLFSLLSLLGIAANGFIV. Over 29-40 the chain is Cytoplasmic; that stretch reads LVLGREWLRYGR. Residues 41–61 traverse the membrane as a helical segment; that stretch reads LLPLDMILISLGASRFCLQLV. Residues 62–88 lie on the Extracellular side of the membrane; that stretch reads GTVHNFYYSAQKVEYSGGLGRQFFHLH. A helical membrane pass occupies residues 89–109; sequence WHFLNSATFWFCSWLSVLFCV. The Cytoplasmic portion of the chain corresponds to 110 to 129; the sequence is KIANITHPTFLWLKWRFPAW. Residues 130 to 150 traverse the membrane as a helical segment; it reads VPWLLLGSVLISFIITLLFFW. The Extracellular segment spans residues 151–183; the sequence is VNYPAYQEFLIRKFSVNMTYKWNTRIETYYFPS. N167 carries N-linked (GlcNAc...) asparagine glycosylation. A helical membrane pass occupies residues 184 to 204; it reads LKLVIWSIPFSVFLVSIMLLI. Residues 205 to 234 lie on the Cytoplasmic side of the membrane; that stretch reads NSLRRHTQRMQHNGHSLQDPSTQAHTRALK. Residues 235-255 form a helical membrane-spanning segment; it reads SLISFLILYALSFLSLIIDAT. Residues 256–264 are Extracellular-facing; the sequence is KFISMQNDF. A helical membrane pass occupies residues 265-285; that stretch reads YWPWQIAVYLCISIHPFILIF. The Cytoplasmic segment spans residues 286–307; it reads SNLKLRSVFSQLLLLARGFWVA.

The protein belongs to the G-protein coupled receptor T2R family.

The protein resides in the membrane. Receptor that may play a role in the perception of bitterness and is gustducin-linked. May play a role in sensing the chemical composition of the gastrointestinal content. The activity of this receptor may stimulate alpha gustducin, mediate PLC-beta-2 activation and lead to the gating of TRPM5. This is Taste receptor type 2 member 41 (TAS2R41) from Pan paniscus (Pygmy chimpanzee).